A 481-amino-acid polypeptide reads, in one-letter code: Membrane-bound lytic murein transglycosylase F (481 aa).

An N-terminal signal peptide occupies residues 1-21 (MKPLKLNYFFIGIITLLLALA). Residues 22–268 (LWPSIPWRSS…RLEEKYLGHV (247 aa)) form a non-LT domain region. The LT domain stretch occupies residues 269 to 481 (GEFDYVDTTT…PAVPLTKVPE (213 aa)). The active site involves glutamate 313.

It in the N-terminal section; belongs to the bacterial solute-binding protein 3 family. This sequence in the C-terminal section; belongs to the transglycosylase Slt family.

The protein resides in the cell outer membrane. The catalysed reaction is Exolytic cleavage of the (1-&gt;4)-beta-glycosidic linkage between N-acetylmuramic acid (MurNAc) and N-acetylglucosamine (GlcNAc) residues in peptidoglycan, from either the reducing or the non-reducing ends of the peptidoglycan chains, with concomitant formation of a 1,6-anhydrobond in the MurNAc residue.. Functionally, murein-degrading enzyme that degrades murein glycan strands and insoluble, high-molecular weight murein sacculi, with the concomitant formation of a 1,6-anhydromuramoyl product. Lytic transglycosylases (LTs) play an integral role in the metabolism of the peptidoglycan (PG) sacculus. Their lytic action creates space within the PG sacculus to allow for its expansion as well as for the insertion of various structures such as secretion systems and flagella. The sequence is that of Membrane-bound lytic murein transglycosylase F from Pectobacterium atrosepticum (strain SCRI 1043 / ATCC BAA-672) (Erwinia carotovora subsp. atroseptica).